Here is a 437-residue protein sequence, read N- to C-terminus: Cytochrome c biogenesis protein Ccs1 (437 aa).

The next 3 membrane-spanning stretches (helical) occupy residues 23–43 (LQFS…GTII), 82–102 (TWWF…CSLS), and 168–188 (LAPI…VLGL).

The protein belongs to the Ccs1/CcsB family. May interact with CcsA.

Its subcellular location is the plastid. It localises to the chloroplast thylakoid membrane. Its function is as follows. Required during biogenesis of c-type cytochromes (cytochrome c6 and cytochrome f) at the step of heme attachment. The polypeptide is Cytochrome c biogenesis protein Ccs1 (Porphyra purpurea (Red seaweed)).